We begin with the raw amino-acid sequence, 445 residues long: tRNA-2-methylthio-N(6)-dimethylallyladenosine synthase (445 aa).

The MTTase N-terminal domain maps to 13 to 129 (KKLFIKTYGC…LPAMARAGRG (117 aa)). [4Fe-4S] cluster contacts are provided by cysteine 22, cysteine 58, cysteine 92, cysteine 163, cysteine 167, and cysteine 170. Positions 149 to 383 (TRRAPAAFLT…LTSQQKAAQE (235 aa)) constitute a Radical SAM core domain. The region spanning 383 to 445 (EGMVGRELGV…PNSLAGVLAA (63 aa)) is the TRAM domain.

Belongs to the methylthiotransferase family. MiaB subfamily. As to quaternary structure, monomer. The cofactor is [4Fe-4S] cluster.

It is found in the cytoplasm. It catalyses the reaction N(6)-dimethylallyladenosine(37) in tRNA + (sulfur carrier)-SH + AH2 + 2 S-adenosyl-L-methionine = 2-methylsulfanyl-N(6)-dimethylallyladenosine(37) in tRNA + (sulfur carrier)-H + 5'-deoxyadenosine + L-methionine + A + S-adenosyl-L-homocysteine + 2 H(+). Its function is as follows. Catalyzes the methylthiolation of N6-(dimethylallyl)adenosine (i(6)A), leading to the formation of 2-methylthio-N6-(dimethylallyl)adenosine (ms(2)i(6)A) at position 37 in tRNAs that read codons beginning with uridine. The protein is tRNA-2-methylthio-N(6)-dimethylallyladenosine synthase of Paracoccus denitrificans (strain Pd 1222).